Here is a 225-residue protein sequence, read N- to C-terminus: Ribose-5-phosphate isomerase A (225 aa).

Substrate contacts are provided by residues 33–36, 86–89, and 99–102; these read TGST, DGAD, and KGGG. Residue E108 is the Proton acceptor of the active site. K126 provides a ligand contact to substrate.

It belongs to the ribose 5-phosphate isomerase family. Homodimer.

The catalysed reaction is aldehydo-D-ribose 5-phosphate = D-ribulose 5-phosphate. It functions in the pathway carbohydrate degradation; pentose phosphate pathway; D-ribose 5-phosphate from D-ribulose 5-phosphate (non-oxidative stage): step 1/1. In terms of biological role, catalyzes the reversible conversion of ribose-5-phosphate to ribulose 5-phosphate. This Bordetella petrii (strain ATCC BAA-461 / DSM 12804 / CCUG 43448) protein is Ribose-5-phosphate isomerase A.